Reading from the N-terminus, the 337-residue chain is Inositol 2-dehydrogenase (337 aa).

Belongs to the Gfo/Idh/MocA family. Homotetramer.

The catalysed reaction is myo-inositol + NAD(+) = scyllo-inosose + NADH + H(+). In terms of biological role, involved in the oxidation of myo-inositol (MI) to 2-keto-myo-inositol (2KMI or 2-inosose). The protein is Inositol 2-dehydrogenase of Corynebacterium glutamicum (strain R).